The primary structure comprises 854 residues: Translation initiation factor IF-2 (854 aa).

Residues 61-72 (KNIKTPTAKKPK) show a composition bias toward basic residues. Disordered regions lie at residues 61-115 (KNIK…LASA) and 167-186 (ESLKKKKKEKKSFVASKKES). Basic and acidic residues predominate over residues 73-108 (KENAKDQEKLNESEKKEPKKEESKEQEKQEIIDTHK). In terms of domain architecture, tr-type G spans 353–520 (TRAPVITIMG…IVLLQADILE (168 aa)). Residues 362–369 (GHVDHGKT) form a G1 region. Residue 362–369 (GHVDHGKT) coordinates GTP. The segment at 387–391 (GITQH) is G2. A G3 region spans residues 408–411 (DTPG). GTP contacts are provided by residues 408 to 412 (DTPGH) and 462 to 465 (NKMD). Positions 462–465 (NKMD) are G4. Positions 498–500 (SAK) are G5.

It belongs to the TRAFAC class translation factor GTPase superfamily. Classic translation factor GTPase family. IF-2 subfamily.

The protein localises to the cytoplasm. Its function is as follows. One of the essential components for the initiation of protein synthesis. Protects formylmethionyl-tRNA from spontaneous hydrolysis and promotes its binding to the 30S ribosomal subunits. Also involved in the hydrolysis of GTP during the formation of the 70S ribosomal complex. The chain is Translation initiation factor IF-2 from Campylobacter jejuni subsp. doylei (strain ATCC BAA-1458 / RM4099 / 269.97).